Here is a 66-residue protein sequence, read N- to C-terminus: DNA gyrase inhibitor YacG (66 aa).

Zn(2+)-binding residues include Cys10, Cys13, Cys29, and Cys33. Residues 46–66 form a disordered region; the sequence is KRIPSDVQITDSDEWSDETRY. Residues 56 to 66 are compositionally biased toward acidic residues; that stretch reads DSDEWSDETRY.

It belongs to the DNA gyrase inhibitor YacG family. In terms of assembly, interacts with GyrB. Zn(2+) serves as cofactor.

Inhibits all the catalytic activities of DNA gyrase by preventing its interaction with DNA. Acts by binding directly to the C-terminal domain of GyrB, which probably disrupts DNA binding by the gyrase. The polypeptide is DNA gyrase inhibitor YacG (Sodalis glossinidius (strain morsitans)).